The chain runs to 682 residues: DNA ligase (682 aa).

NAD(+) is bound by residues 42–46, 88–89, and E121; these read DAAYD and SL. K123 serves as the catalytic N6-AMP-lysine intermediate. NAD(+) contacts are provided by R144, E180, K291, and K315. Residues C409, C412, C427, and C433 each contribute to the Zn(2+) site. The region spanning 601–682 is the BRCT domain; it reads AAGGALAGKT…FRSLAGLPPG (82 aa).

It belongs to the NAD-dependent DNA ligase family. LigA subfamily. Requires Mg(2+) as cofactor. Mn(2+) serves as cofactor.

The enzyme catalyses NAD(+) + (deoxyribonucleotide)n-3'-hydroxyl + 5'-phospho-(deoxyribonucleotide)m = (deoxyribonucleotide)n+m + AMP + beta-nicotinamide D-nucleotide.. Functionally, DNA ligase that catalyzes the formation of phosphodiester linkages between 5'-phosphoryl and 3'-hydroxyl groups in double-stranded DNA using NAD as a coenzyme and as the energy source for the reaction. It is essential for DNA replication and repair of damaged DNA. The sequence is that of DNA ligase from Acidiphilium cryptum (strain JF-5).